Reading from the N-terminus, the 959-residue chain is Protovillin (959 aa).

The tract at residues Met-1–Ile-53 is tail. Residues Gly-54–Thr-832 form a core region. 6 Gelsolin-like repeats span residues Ser-64–Thr-116, Ile-204–Gly-244, Ile-309–Thr-366, Arg-479–Gly-529, Ile-603–Ala-647, and Phe-713–Leu-754. A run of 2 repeats spans residues Thr-840 to Val-849 and Thr-851 to Val-860. The segment at Thr-840–Val-860 is 2 X 10 AA repeats of T-P-K-P-I-T-T-P-T-V. In terms of domain architecture, HP spans Thr-895 to Phe-959.

Belongs to the villin/gelsolin family.

Its subcellular location is the cytoplasm. The protein localises to the cytoskeleton. Its function is as follows. Caps actin filaments but displays neither severing nor cross-linking nor nucleating activities. Protovillin seems to be a villin precursor with only archaic capping activity. It lacks essential changes in the sequence to allow bundling of actin filaments and consequently the appearance of microvilli. This chain is Protovillin (vilB), found in Dictyostelium discoideum (Social amoeba).